Consider the following 346-residue polypeptide: Histone PARylation factor 1 (346 aa).

The residue at position 1 (Met-1) is an N-acetylmethionine. Residues Lys-19, Lys-186, and Lys-233 each carry the N6-acetyllysine modification. At Asp-235 the chain carries PolyADP-ribosyl aspartic acid. Tyr-238 bears the ADP-ribosyltyrosine mark. At Glu-240 the chain carries PolyADP-ribosyl glutamic acid. The interaction with PARP1 stretch occupies residues 242–346 (PETDADLKRI…SEENIDQLAG (105 aa)). Glu-284 (proton donor) is an active-site residue.

The protein belongs to the HPF1 family. Interacts with PARP1 (via the PARP catalytic domain). Interacts with PARP2 (via the PARP catalytic domain). Interacts with core nucleosomes in a PARP1- and PARP2-dependent manner.

It localises to the chromosome. The protein localises to the nucleus. Cofactor for serine ADP-ribosylation that confers serine specificity on PARP1 and PARP2 and plays a key role in DNA damage response. Initiates the repair of double-strand DNA breaks: recruited to DNA damage sites by PARP1 and PARP2 and switches the amino acid specificity of PARP1 and PARP2 from aspartate or glutamate to serine residues, licensing serine ADP-ribosylation of target proteins. Serine ADP-ribosylation of target proteins, such as histones, promotes decompaction of chromatin and the recruitment of repair factors leading to the reparation of DNA strand breaks. Serine ADP-ribosylation of proteins constitutes the primary form of ADP-ribosylation of proteins in response to DNA damage. HPF1 acts by completing the active site of PARP1 and PARP2: forms a composite active site composed of residues from HPF1 and PARP1 or PARP2. While HPF1 promotes the initiation of serine ADP-ribosylation, it restricts the polymerase activity of PARP1 and PARP2 in order to limit the length of poly-ADP-ribose chains. HPF1 also promotes tyrosine ADP-ribosylation, probably by conferring tyrosine specificity on PARP1. This Mus musculus (Mouse) protein is Histone PARylation factor 1.